The primary structure comprises 107 residues: Nucleoid-associated protein A1G_07310 (107 aa).

This sequence belongs to the YbaB/EbfC family. As to quaternary structure, homodimer.

The protein resides in the cytoplasm. The protein localises to the nucleoid. Its function is as follows. Binds to DNA and alters its conformation. May be involved in regulation of gene expression, nucleoid organization and DNA protection. The polypeptide is Nucleoid-associated protein A1G_07310 (Rickettsia rickettsii (strain Sheila Smith)).